A 357-amino-acid chain; its full sequence is Protein RecA (357 aa).

ATP is bound at residue Gly78–Thr85.

It belongs to the RecA family.

It localises to the cytoplasm. Can catalyze the hydrolysis of ATP in the presence of single-stranded DNA, the ATP-dependent uptake of single-stranded DNA by duplex DNA, and the ATP-dependent hybridization of homologous single-stranded DNAs. It interacts with LexA causing its activation and leading to its autocatalytic cleavage. The chain is Protein RecA from Cereibacter sphaeroides (strain ATCC 17029 / ATH 2.4.9) (Rhodobacter sphaeroides).